The chain runs to 252 residues: Triosephosphate isomerase (252 aa).

Residue 10-12 participates in substrate binding; that stretch reads NWK. The active-site Electrophile is the His-96. The active-site Proton acceptor is the Glu-168. Residues Gly-174, Ser-214, and 235 to 236 each bind substrate; that span reads GG.

It belongs to the triosephosphate isomerase family. As to quaternary structure, homodimer.

Its subcellular location is the cytoplasm. It carries out the reaction D-glyceraldehyde 3-phosphate = dihydroxyacetone phosphate. It functions in the pathway carbohydrate biosynthesis; gluconeogenesis. It participates in carbohydrate degradation; glycolysis; D-glyceraldehyde 3-phosphate from glycerone phosphate: step 1/1. Involved in the gluconeogenesis. Catalyzes stereospecifically the conversion of dihydroxyacetone phosphate (DHAP) to D-glyceraldehyde-3-phosphate (G3P). The sequence is that of Triosephosphate isomerase from Lactobacillus acidophilus (strain ATCC 700396 / NCK56 / N2 / NCFM).